We begin with the raw amino-acid sequence, 1503 residues long: DNA-directed RNA polymerase subunit beta' (1503 aa).

4 residues coordinate Zn(2+): Cys71, Cys73, Cys86, and Cys89. 3 residues coordinate Mg(2+): Asp470, Asp472, and Asp474. Cys800, Cys874, Cys881, and Cys884 together coordinate Zn(2+).

It belongs to the RNA polymerase beta' chain family. In terms of assembly, the RNAP catalytic core consists of 2 alpha, 1 beta, 1 beta' and 1 omega subunit. When a sigma factor is associated with the core the holoenzyme is formed, which can initiate transcription. Mg(2+) serves as cofactor. Zn(2+) is required as a cofactor.

It carries out the reaction RNA(n) + a ribonucleoside 5'-triphosphate = RNA(n+1) + diphosphate. Its function is as follows. DNA-dependent RNA polymerase catalyzes the transcription of DNA into RNA using the four ribonucleoside triphosphates as substrates. The chain is DNA-directed RNA polymerase subunit beta' from Sulfurimonas denitrificans (strain ATCC 33889 / DSM 1251) (Thiomicrospira denitrificans (strain ATCC 33889 / DSM 1251)).